The chain runs to 183 residues: UPF0397 protein EAT1b_2102 (183 aa).

Helical transmembrane passes span 9 to 29, 42 to 62, 74 to 94, 117 to 137, and 147 to 167; these read IVAT…AAIP, AFLA…IGLI, SPWW…GLIA, AVVQ…LIYA, and GAVA…LLLV.

The protein belongs to the UPF0397 family.

The protein resides in the cell membrane. The sequence is that of UPF0397 protein EAT1b_2102 from Exiguobacterium sp. (strain ATCC BAA-1283 / AT1b).